The following is a 691-amino-acid chain: Menaquinone reductase, molybdopterin-binding-like subunit (691 aa).

A signal peptide (tat-type signal) is located at residues 1–27; that stretch reads MALDRRGFLKFIGGATAGILATPVVWK. Positions 50-106 constitute a 4Fe-4S Mo/W bis-MGD-type domain; that stretch reads NSYVPTVSKLCPTGIGVRVRLVDGRPVRVIGNPEHPLSKGGVSSIAAAEVQMLYSPA.

This sequence belongs to the prokaryotic molybdopterin-containing oxidoreductase family. As to quaternary structure, the Qrc complex is composed of four subunits: QrcA, QrcB, QrcC and QrcD. Can form a supercomplex with the [NiFe] hydrogenase HynA1 and the tetraheme Type I cytochrome c3 TpIc(3), its physiological electron donors. It depends on There is no molybdenum or tungsten pterin cofactor present in the Qrc complex, despite the similarity of QrcB to molybdopterin-containing oxidoreductases. as a cofactor. Post-translationally, predicted to be exported by the Tat system. The position of the signal peptide cleavage has not been experimentally proven.

The protein localises to the periplasm. Functionally, component of the respiratory Qrc complex, that catalyzes the reduction of the menaquinone pool using electrons transferred from the reduced periplasmic cytochrome c3, and which is probably involved in sulfate respiration. Is likely essential for growth on H(2) or formate since the periplasmic hydrogenases and/or formate dehydrogenases act as primary electron donors for the Qrc complex. The function of the QrcB subunit is unknown; in the absence of a catalytic site, it may provide a structural scaffold for the other subunits. The sequence is that of Menaquinone reductase, molybdopterin-binding-like subunit from Nitratidesulfovibrio vulgaris (strain ATCC 29579 / DSM 644 / CCUG 34227 / NCIMB 8303 / VKM B-1760 / Hildenborough) (Desulfovibrio vulgaris).